The primary structure comprises 254 residues: tRNA (guanine-N(1)-)-methyltransferase (254 aa).

S-adenosyl-L-methionine is bound by residues Gly115 and 135–140 (VGDFVL).

Belongs to the RNA methyltransferase TrmD family. As to quaternary structure, homodimer.

The protein resides in the cytoplasm. It catalyses the reaction guanosine(37) in tRNA + S-adenosyl-L-methionine = N(1)-methylguanosine(37) in tRNA + S-adenosyl-L-homocysteine + H(+). Its function is as follows. Specifically methylates guanosine-37 in various tRNAs. The chain is tRNA (guanine-N(1)-)-methyltransferase from Francisella tularensis subsp. tularensis (strain FSC 198).